The sequence spans 185 residues: Probable RNA 2'-phosphotransferase (185 aa).

Belongs to the KptA/TPT1 family.

Functionally, removes the 2'-phosphate from RNA via an intermediate in which the phosphate is ADP-ribosylated by NAD followed by a presumed transesterification to release the RNA and generate ADP-ribose 1''-2''-cyclic phosphate (APPR&gt;P). May function as an ADP-ribosylase. This Bacillus thuringiensis subsp. konkukian (strain 97-27) protein is Probable RNA 2'-phosphotransferase.